Reading from the N-terminus, the 643-residue chain is Hepatoma-derived growth factor-related protein 2 (643 aa).

One can recognise a PWWP domain in the interval 7–64 (PGDLVFAKMKGYPHWPARIDDVKDGAVKPPPNKYPIFFYGTHETAFLAPKDLFPYEKC). Disordered regions lie at residues 88-450 (PQAS…KKPE) and 548-643 (LESQ…NQTS). Residues 90–104 (ASYSLPPASVSSSDS) show a composition bias toward low complexity. Residues 107–116 (PEEKSTARSD) are compositionally biased toward basic and acidic residues. Residues 176 to 187 (SEEENSDSDQDF) are compositionally biased toward acidic residues. A compositionally biased stretch (polar residues) spans 194–204 (PRIQRRTTNLG). Residues 209–231 (IFAESDSKSDESEDEKKEEEQKK) show a composition bias toward basic and acidic residues. Residues 232–249 (SPSSSSASSPSLSSSDSE) are compositionally biased toward low complexity. 3 stretches are compositionally biased toward basic and acidic residues: residues 290–353 (SVDR…DSSK), 373–382 (EDKKPVKEVK), and 417–450 (RPSE…KKPE). The stretch at 295–345 (SEWKKRDEERRRELEERRKKEQEEQLRRLREEEREEEERKKREKAEKGDKS) forms a coiled coil. Over residues 549-559 (ESQQKTVQKVN) the composition is skewed to polar residues. Composition is skewed to basic and acidic residues over residues 560–575 (TAEK…GKVE) and 608–622 (NKTE…HAEH).

The protein belongs to the HDGF family.

It is found in the nucleus. Its subcellular location is the cytoplasm. Functionally, may act as a regulator of myogenesis. Promotes the repair of DNA double-strand breaks (DSBs) through the homologous recombination pathway by facilitating the recruitment of the DNA endonuclease RBBP8 to the DSBs. This chain is Hepatoma-derived growth factor-related protein 2 (hdgfl2), found in Xenopus tropicalis (Western clawed frog).